Reading from the N-terminus, the 446-residue chain is N-succinylarginine dihydrolase (446 aa).

Substrate contacts are provided by residues 19–28, Asn110, and 137–138; these read AGLSFGNVAS and HR. The active site involves Glu174. Arg213 serves as a coordination point for substrate. His249 is an active-site residue. Positions 251 and 364 each coordinate substrate. Catalysis depends on Cys370, which acts as the Nucleophile.

It belongs to the succinylarginine dihydrolase family. Homodimer.

It catalyses the reaction N(2)-succinyl-L-arginine + 2 H2O + 2 H(+) = N(2)-succinyl-L-ornithine + 2 NH4(+) + CO2. It participates in amino-acid degradation; L-arginine degradation via AST pathway; L-glutamate and succinate from L-arginine: step 2/5. Catalyzes the hydrolysis of N(2)-succinylarginine into N(2)-succinylornithine, ammonia and CO(2). The sequence is that of N-succinylarginine dihydrolase from Burkholderia orbicola (strain MC0-3).